The chain runs to 310 residues: Ribonuclease Z (310 aa).

Zn(2+) contacts are provided by H60, H62, D64, H65, H140, D209, and H269. D64 functions as the Proton acceptor in the catalytic mechanism.

It belongs to the RNase Z family. In terms of assembly, homodimer. Zn(2+) serves as cofactor.

It carries out the reaction Endonucleolytic cleavage of RNA, removing extra 3' nucleotides from tRNA precursor, generating 3' termini of tRNAs. A 3'-hydroxy group is left at the tRNA terminus and a 5'-phosphoryl group is left at the trailer molecule.. In terms of biological role, zinc phosphodiesterase, which displays some tRNA 3'-processing endonuclease activity. Probably involved in tRNA maturation, by removing a 3'-trailer from precursor tRNA. In Methanococcus maripaludis (strain C7 / ATCC BAA-1331), this protein is Ribonuclease Z.